The following is a 159-amino-acid chain: Ribosomal RNA large subunit methyltransferase H (159 aa).

S-adenosyl-L-methionine-binding positions include Leu76, Gly108, and 127 to 132 (FSKMTL).

The protein belongs to the RNA methyltransferase RlmH family. Homodimer.

The protein localises to the cytoplasm. It carries out the reaction pseudouridine(1915) in 23S rRNA + S-adenosyl-L-methionine = N(3)-methylpseudouridine(1915) in 23S rRNA + S-adenosyl-L-homocysteine + H(+). Specifically methylates the pseudouridine at position 1915 (m3Psi1915) in 23S rRNA. The polypeptide is Ribosomal RNA large subunit methyltransferase H (Bacillus thuringiensis subsp. konkukian (strain 97-27)).